We begin with the raw amino-acid sequence, 197 residues long: Endoribonuclease YbeY (197 aa).

Residues His156, His160, and His166 each contribute to the Zn(2+) site.

This sequence belongs to the endoribonuclease YbeY family. Zn(2+) is required as a cofactor.

It localises to the cytoplasm. Its function is as follows. Single strand-specific metallo-endoribonuclease involved in late-stage 70S ribosome quality control and in maturation of the 3' terminus of the 16S rRNA. The chain is Endoribonuclease YbeY from Cupriavidus metallidurans (strain ATCC 43123 / DSM 2839 / NBRC 102507 / CH34) (Ralstonia metallidurans).